A 77-amino-acid chain; its full sequence is Putative ankyrin repeat protein RC0956 (77 aa).

The ANK repeat unit spans residues Thr8–Gly38.

The sequence is that of Putative ankyrin repeat protein RC0956 from Rickettsia conorii (strain ATCC VR-613 / Malish 7).